The chain runs to 154 residues: CASP-like protein 5B2 (154 aa).

Topologically, residues 1 to 17 (MAGLAGRPGSWGGLVLR) are cytoplasmic. The helical transmembrane segment at 18 to 38 (VGQALFAAACIGVMGSSLGFA) threads the bilayer. Residues 39 to 42 (SYTA) lie on the Extracellular side of the membrane. The chain crosses the membrane as a helical span at residues 43-63 (FCYLIASMGLQMLWSFGLACL). Over 64–87 (DGYAIRANKDLTSPILLSLFVVGD) the chain is Cytoplasmic. The chain crosses the membrane as a helical span at residues 88–107 (WVTAILSFAASSSAAGVVIL). Over 108–130 (FQKDVLFCRRYPQLPCGKYELAT) the chain is Extracellular. Residues 131–151 (AFAFLSWALSATSALIMFWLL) traverse the membrane as a helical segment. Over 152–154 (AAF) the chain is Cytoplasmic.

This sequence belongs to the Casparian strip membrane proteins (CASP) family. In terms of assembly, homodimer and heterodimers.

The protein resides in the cell membrane. In Zea mays (Maize), this protein is CASP-like protein 5B2.